A 677-amino-acid chain; its full sequence is WD and tetratricopeptide repeats protein 1 (677 aa).

WD repeat units lie at residues 45 to 84 (GHSG…KLLS), 88 to 129 (GHTA…TIHM), 132 to 172 (DHTN…KHSE), 182 to 222 (GPMV…NHRK), and 265 to 305 (RLRV…RPYT). Residue Ser-352 is modified to Phosphoserine. TPR repeat units follow at residues 361 to 394 (LERV…APHN) and 396 to 431 (MLYG…NPCH). A disordered region spans residues 489–509 (EEKKAAGGGGGPVRLRSTSRK). Residue Ser-511 is modified to Phosphoserine. WD repeat units follow at residues 535–575 (NTTT…LVRV) and 578–617 (GDES…EDLT). The tract at residues 655-677 (SSGGAGASDDEDSAEGQVQCRPS) is disordered.

Its pathway is protein modification; protein ubiquitination. Its function is as follows. May function as a substrate receptor for CUL4-DDB1 E3 ubiquitin-protein ligase complex. This is WD and tetratricopeptide repeats protein 1 (Wdtc1) from Mus musculus (Mouse).